Reading from the N-terminus, the 586-residue chain is Frizzled-10-A (586 aa).

Positions 1-26 (MDVSGVTGLLRGTALLLVLAAALCSA) are cleaved as a signal peptide. The Extracellular segment spans residues 27-230 (ISSINPDRSG…DVYWSKDDKK (204 aa)). The 122-residue stretch at 35–156 (SGDGRCQAIE…NDPNYLCMEA (122 aa)) folds into the FZ domain. 5 disulfides stabilise this stretch: Cys40–Cys101, Cys48–Cys94, Cys85–Cys123, Cys112–Cys153, and Cys116–Cys140. Asn54 carries N-linked (GlcNAc...) asparagine glycosylation. An N-linked (GlcNAc...) asparagine glycan is attached at Asn159. Positions 161-199 (TDETPRGSSMLPPIFRPQRPSSGHEIYPKDPTSRSSCEN) are disordered. Residues 231–251 (FAFIWIAIWSILCFFSSAFTV) traverse the membrane as a helical segment. The Cytoplasmic segment spans residues 252–267 (LTFLVDPLRFKYPERP). The helical transmembrane segment at 268–288 (IIFLSMCYCVYSVGYIIRLFA) threads the bilayer. Over 289–315 (GADSIACDRDSGQLYVIQEGLESTGCT) the chain is Extracellular. A helical membrane pass occupies residues 316–336 (IVFLILYYFGMASSLWWVILT). Over 337–356 (LTWFLAAGKKWGHEAIEANS) the chain is Cytoplasmic. Residues 357-377 (SYFHLAAWAIPAVKTIMILVM) traverse the membrane as a helical segment. Residues 378-401 (RRVAGDELTGVCYVGSMDVNALTG) lie on the Extracellular side of the membrane. A helical membrane pass occupies residues 402 to 422 (FVLIPLACYLIIGTSFILSGF). Over 423–448 (VALFHIRRVMKTGGENTDKLEKLMVR) the chain is Cytoplasmic. The chain crosses the membrane as a helical span at residues 449 to 469 (IGVFSVLYTVPATCVIACYFY). Residues 470–507 (ERLNMDFWKILATQDKCKMDSQTKTLDCTMTSSIPAVE) are Extracellular-facing. Residues 508 to 528 (IFMVKIFMLLVVGITSGMWIW) traverse the membrane as a helical segment. Residues 529 to 586 (TSKTVQSWQNVFSKRLKKRNRSKPASVITSAGIYKKPQHPPKVHHGKYESALQSPTCV) are Cytoplasmic-facing. Residues 531–536 (KTVQSW) carry the Lys-Thr-X-X-X-Trp motif, mediates interaction with the PDZ domain of Dvl family members motif. Positions 563 to 586 (KKPQHPPKVHHGKYESALQSPTCV) are disordered. Positions 564–573 (KPQHPPKVHH) are enriched in basic residues. The PDZ-binding motif lies at 584 to 586 (TCV).

It belongs to the G-protein coupled receptor Fz/Smo family. As to expression, expressed in liver, lung, brain, testis, stomach, kidney, eye, skeletal muscle and skin.

Its subcellular location is the cell membrane. Functionally, receptor for Wnt proteins. Most of frizzled receptors are coupled to the beta-catenin canonical signaling pathway, which leads to the activation of disheveled proteins, inhibition of GSK-3 kinase, nuclear accumulation of beta-catenin and activation of Wnt target genes. A second signaling pathway involving PKC and calcium fluxes has been seen for some family members, but it is not yet clear if it represents a distinct pathway or if it can be integrated in the canonical pathway, as PKC seems to be required for Wnt-mediated inactivation of GSK-3 kinase. Both pathways seem to involve interactions with G-proteins. May be involved in transduction and intercellular transmission of polarity information during tissue morphogenesis and/or in differentiated tissues. Activated by Wnt8. Could have an antagonizing activity in the morphogenesis during development. This is Frizzled-10-A (fzd10-a) from Xenopus laevis (African clawed frog).